The chain runs to 364 residues: Ribosomal RNA large subunit methyltransferase F (364 aa).

A disordered region spans residues 1 to 52 (MPKPAIKTAAKLAMSSAGKRGKPSTPKSLAKPQTTKPKTASKLKAKHGEQKR). Residues 25 to 38 (TPKSLAKPQTTKPK) are compositionally biased toward polar residues.

The protein belongs to the methyltransferase superfamily. METTL16/RlmF family.

Its subcellular location is the cytoplasm. The catalysed reaction is adenosine(1618) in 23S rRNA + S-adenosyl-L-methionine = N(6)-methyladenosine(1618) in 23S rRNA + S-adenosyl-L-homocysteine + H(+). In terms of biological role, specifically methylates the adenine in position 1618 of 23S rRNA. The chain is Ribosomal RNA large subunit methyltransferase F from Shewanella sp. (strain ANA-3).